We begin with the raw amino-acid sequence, 783 residues long: Heat shock transcription factor (783 aa).

The interval 1–59 is disordered; that stretch reads MTTNLYAIAGPSKPTTPTSTPSPRSEPPSPLKSLTSLPTNPLNSHGTSTPNTLTNQLSS. 2 stretches are compositionally biased toward low complexity: residues 11–23 and 31–42; these read PSKPTTPTSTPSP and LKSLTSLPTNPL. Residues 43 to 59 are compositionally biased toward polar residues; it reads NSHGTSTPNTLTNQLSS. The DNA-binding element occupies 78–168; the sequence is MKVPAFLNKL…PIELWEFANP (91 aa). The interval 181 to 262 is disordered; the sequence is VTRKNNRPSN…PGSVPPSHTS (82 aa). Composition is skewed to low complexity over residues 189–199 and 209–233; these read SNSGVGPSSSV and STRSASAAAASGSASGQIQQAISQG. Residues 238–262 show a composition bias toward polar residues; that stretch reads NHSTSGKYLITDGTTPGSVPPSHTS. An involved in trimerization region spans residues 280–333; the sequence is GIAAIRQTQASIATDLRKLQASNEALWRQAYETQEKQRKHEETIDLIVSFLERL. Composition is skewed to basic and acidic residues over residues 350-372 and 399-415; these read RGVGVRRDRDGREGRDSRDSRFA and TGEHGEIESPTSDDRLV. 3 disordered regions span residues 350–554, 599–652, and 736–783; these read RGVG…LLSP, QALA…TLAL, and QGLA…KSES. A compositionally biased stretch (polar residues) spans 418-448; that stretch reads GSNSEYSIPSVKRTSSSSHPISLGQLGSSRF. 4 stretches are compositionally biased toward low complexity: residues 452-467, 497-511, 522-550, and 616-632; these read PSEDPSPSASGPGSTS, LSPLSDTDPLLPSSS, PFPSSNSNQSNSFNPSNPSSAWASNPSQP, and NPNGNASTSASASAHGM. The span at 742 to 752 shows a compositional bias: acidic residues; sequence GEEEGEREVEG. Residues 753–765 show a composition bias toward gly residues; it reads DGGVSSSGAGAGA.

The protein belongs to the HSF family. Homotrimer. Homotrimerization increases the affinity of HSF1 to DNA. Interacts with transcriptional coregulator SSA1 on chromatin.

It is found in the nucleus. Functionally, DNA-binding transcription factor that specifically binds heat shock promoter elements (HSE) and activates transcription. Together with its coregulator SSA1, activates expression of laccase LAC1 during glucose starvation. This chain is Heat shock transcription factor, found in Cryptococcus neoformans var. neoformans serotype D (strain JEC21 / ATCC MYA-565) (Filobasidiella neoformans).